Here is a 353-residue protein sequence, read N- to C-terminus: Palmitoyltransferase SWF1 (353 aa).

Position 1 (Met1) is a topological domain, lumenal. Residues 2 to 22 (LFTLIVCLTIISSLATFLLLF) traverse the membrane as a helical segment. The Cytoplasmic portion of the chain corresponds to 23–61 (GDSPSFRNTPIQKLRNSLLSISRDIFQFYHWLDEKLNGQ). The helical transmembrane segment at 62–82 (LLKILNWLVPVGYVMVVTVCF) threads the bilayer. At 83-100 (QQFLTHTLPMLSSPGLFR) the chain is on the lumenal side. A helical membrane pass occupies residues 101 to 121 (LFTIYFSMVLIYASTILAAFS). The Cytoplasmic portion of the chain corresponds to 122 to 190 (DPGRITTINL…NNCVGYYNYK (69 aa)). The DHHC domain maps to 147–197 (KTCSTCHIAKPARSKHCSVCNQCFLLYDHHCVWINNCVGYYNYKWFMLFLI). Cys177 (S-palmitoyl cysteine intermediate) is an active-site residue. Residues 191–211 (WFMLFLISNINMLGYGGWLCY) traverse the membrane as a helical segment. Over 212-233 (WALTPVSWRKITSTNNANKVTG) the chain is Lumenal. A helical membrane pass occupies residues 234–254 (IFLILCSIFIVITTLFTFLHL). Topologically, residues 255–353 (RYIYLGVTTN…WNNLIERLKW (99 aa)) are cytoplasmic.

Belongs to the DHHC palmitoyltransferase family. SWF1 subfamily.

It is found in the endoplasmic reticulum membrane. The catalysed reaction is L-cysteinyl-[protein] + hexadecanoyl-CoA = S-hexadecanoyl-L-cysteinyl-[protein] + CoA. In terms of biological role, palmitoyltransferase that targets several endosomal SNAREs. Palmitoylates the SNAREs at cysteine residues close to the cytoplasmic end of their transmembrane domain. May have a role in the cellular quality control of transmembrane domain-containing proteins. The protein is Palmitoyltransferase SWF1 (SWF1) of Candida albicans (strain SC5314 / ATCC MYA-2876) (Yeast).